Consider the following 445-residue polypeptide: D-serine transporter DsdX (445 aa).

12 helical membrane-spanning segments follow: residues 5 to 25 (IWVVSTLLISIVLIVLTIVKF), 29 to 49 (PFLALLLASFFVGTMMGMGPL), 57 to 77 (SGIGGTLGFLAAVIGLGTILG), 106 to 126 (VLVGLICGITLFVEVGVVLLI), 140 to 160 (LLKLAIPLCTALMAVHCVVPP), 178 to 198 (VIVYGLLVGLMASLIGGPLFL), 224 to 244 (TLPSLGATLFTVLLPIALMLV), 265 to 285 (IGNPITATFIAVFVAYYVLGI), 302 to 322 (FGSIANILLIIGAGGAFNAIL), 343 to 363 (ILLAWLVALILHAAVGSATVA), 385 to 405 (IIAIAIGSGAIGCTIVTDSLF), and 425 to 445 (TATFIASVIALAGTFLLSFII).

It belongs to the GntP permease family.

It is found in the cell inner membrane. Its activity is regulated as follows. Uptake of D-serine is inhibited by carbonyl cyanide m-chlorophenylhydrazone (CCCP), and at high concentrations of D-threonine, stimulated by D-cycloserine and not affected by D-alanine or glycine. In terms of biological role, protein that allows transport of D-serine across the inner membrane, does not transport D-alanine nor probably glycine. Is probably a H(+) symporter, as CCCP inhibits transport. Transports D-serine more efficiently than CycA. The polypeptide is D-serine transporter DsdX (dsdX) (Escherichia coli O6:H1 (strain CFT073 / ATCC 700928 / UPEC)).